A 213-amino-acid polypeptide reads, in one-letter code: ATP-dependent Clp protease proteolytic subunit 1 (213 aa).

Catalysis depends on S114, which acts as the Nucleophile. Residue H139 is part of the active site.

Belongs to the peptidase S14 family. As to quaternary structure, fourteen ClpP subunits assemble into 2 heptameric rings which stack back to back to give a disk-like structure with a central cavity, resembling the structure of eukaryotic proteasomes.

It localises to the cytoplasm. The enzyme catalyses Hydrolysis of proteins to small peptides in the presence of ATP and magnesium. alpha-casein is the usual test substrate. In the absence of ATP, only oligopeptides shorter than five residues are hydrolyzed (such as succinyl-Leu-Tyr-|-NHMec, and Leu-Tyr-Leu-|-Tyr-Trp, in which cleavage of the -Tyr-|-Leu- and -Tyr-|-Trp bonds also occurs).. Cleaves peptides in various proteins in a process that requires ATP hydrolysis. Has a chymotrypsin-like activity. Plays a major role in the degradation of misfolded proteins. The sequence is that of ATP-dependent Clp protease proteolytic subunit 1 from Pseudomonas aeruginosa (strain ATCC 15692 / DSM 22644 / CIP 104116 / JCM 14847 / LMG 12228 / 1C / PRS 101 / PAO1).